A 528-amino-acid chain; its full sequence is Succinate-semialdehyde dehydrogenase, mitochondrial (528 aa).

Residues 1–34 constitute a mitochondrion transit peptide; sequence MVIGAAARVAIGGCRKLISSHTSLLLVSSQCRQM. NAD(+) is bound at residue 196–198; sequence TPW. Arginine 207 lines the substrate pocket. Residues 222–225, 275–280, and glutamate 297 each bind NAD(+); these read KPSE and GSTAVG. The active-site Proton acceptor is the glutamate 297. Arginine 325 is a binding site for substrate. The active-site Nucleophile is cysteine 331. A disulfide bridge links cysteine 331 with cysteine 333. An NAD(+)-binding site is contributed by 428–430; that stretch reads EIF. Serine 488 contacts substrate.

The protein belongs to the aldehyde dehydrogenase family. Homotetramer. As to expression, expressed in developing leaf tissues.

Its subcellular location is the mitochondrion matrix. It catalyses the reaction succinate semialdehyde + NAD(+) + H2O = succinate + NADH + 2 H(+). The protein operates within amino-acid degradation; 4-aminobutanoate degradation. Its activity is regulated as follows. Competitive inhibition by NADH. Inhibited by ATP, ADP and AMP. Redox-regulated. Inhibited under oxydizing conditions. Its function is as follows. Oxidizes specifically succinate semialdehyde. Involved in plant response to environmental stress by preventing the accumulation of reactive oxygen species, probably by regulating proline, gamma-hydroxybutyrate (GHB) and gamma-aminobutyrate (GABA) levels. Required for the maintenance of the shoot apical meristem (SAM) structure and subsequent adaxial-abaxial axis-dependent development of cotyledons and leaves. This is Succinate-semialdehyde dehydrogenase, mitochondrial from Arabidopsis thaliana (Mouse-ear cress).